Reading from the N-terminus, the 473-residue chain is uncharacterized protein (473 aa).

The segment at M1–D86 is disordered. The segment covering I10 to I19 has biased composition (basic and acidic residues). Composition is skewed to polar residues over residues D20–N39 and E55–A68. S64 is subject to Phosphoserine. The span at S69 to S83 shows a compositional bias: low complexity. 3 RRM domains span residues L95 to F165, I188 to V260, and V305 to L370. The segment at M448–E473 is disordered. Polar residues predominate over residues N453–K467.

This is an uncharacterized protein from Schizosaccharomyces pombe (strain 972 / ATCC 24843) (Fission yeast).